The following is a 156-amino-acid chain: Small ribosomal subunit protein uS7 (156 aa).

It belongs to the universal ribosomal protein uS7 family. In terms of assembly, part of the 30S ribosomal subunit. Contacts proteins S9 and S11.

Functionally, one of the primary rRNA binding proteins, it binds directly to 16S rRNA where it nucleates assembly of the head domain of the 30S subunit. Is located at the subunit interface close to the decoding center, probably blocks exit of the E-site tRNA. This is Small ribosomal subunit protein uS7 from Prochlorococcus marinus (strain MIT 9301).